The primary structure comprises 150 residues: Cell division protein SepF (150 aa).

Residues 26–45 (DREEIPEEHESKDRTAYQSK) form a disordered region.

It belongs to the SepF family. In terms of assembly, homodimer. Interacts with FtsZ.

The protein resides in the cytoplasm. Functionally, cell division protein that is part of the divisome complex and is recruited early to the Z-ring. Probably stimulates Z-ring formation, perhaps through the cross-linking of FtsZ protofilaments. Its function overlaps with FtsA. This is Cell division protein SepF from Bacillus licheniformis (strain ATCC 14580 / DSM 13 / JCM 2505 / CCUG 7422 / NBRC 12200 / NCIMB 9375 / NCTC 10341 / NRRL NRS-1264 / Gibson 46).